A 74-amino-acid chain; its full sequence is Exodeoxyribonuclease 7 small subunit (74 aa).

It belongs to the XseB family. Heterooligomer composed of large and small subunits.

The protein localises to the cytoplasm. It catalyses the reaction Exonucleolytic cleavage in either 5'- to 3'- or 3'- to 5'-direction to yield nucleoside 5'-phosphates.. In terms of biological role, bidirectionally degrades single-stranded DNA into large acid-insoluble oligonucleotides, which are then degraded further into small acid-soluble oligonucleotides. The chain is Exodeoxyribonuclease 7 small subunit from Haemophilus ducreyi (strain 35000HP / ATCC 700724).